A 343-amino-acid chain; its full sequence is 7-epi-alpha-eudesmol synthase ((2E,6E)-farnesyl diphosphate cyclizing) (343 aa).

Positions 80 and 84 each coordinate Mg(2+). A DDXXD motif motif is present at residues 80-84 (DDQFD). Arg177 serves as a coordination point for substrate. Positions 223 and 227 each coordinate Mg(2+). Arg230 is a binding site for substrate. A Mg(2+)-binding site is contributed by Glu231. 317-318 (RY) contributes to the substrate binding site.

Belongs to the terpene synthase family. The cofactor is Mg(2+).

It catalyses the reaction (2E,6E)-farnesyl diphosphate + H2O = 7-epi-alpha-eudesmol + diphosphate. It functions in the pathway secondary metabolite biosynthesis; terpenoid biosynthesis. Its function is as follows. Catalyzes the conversion of (2E,6E)-farnesyl diphosphate (FPP) to yield the bicyclic sesquiterpenol 7-epi-alpha-eudesmol via a 1,10-cyclization, which requires the abstraction of the pyrophosphate from FPP to yield the (E,E)-germacradienyl cation. The only accepted substrate is (2E,6E)-farnesyl diphosphate (FPP). The polypeptide is 7-epi-alpha-eudesmol synthase ((2E,6E)-farnesyl diphosphate cyclizing) (Streptomyces viridochromogenes (strain DSM 40736 / JCM 4977 / BCRC 1201 / Tue 494)).